The following is a 480-amino-acid chain: Plant UBX domain-containing protein 10 (480 aa).

Disordered stretches follow at residues 47 to 78 and 335 to 383; these read DASSSAVDGGGNNRDHDHNNATVTPDYPPRGI and ADQA…AARV. A coiled-coil region spans residues 330–389; sequence RAALEADQAREQQRQEEKERLEREAAEAERKLKEEEEARERAAREAEERQAARVRMRQEK. Residues 336-383 are compositionally biased toward basic and acidic residues; that stretch reads DQAREQQRQEEKERLEREAAEAERKLKEEEEARERAAREAEERQAARV. One can recognise a UBX domain in the interval 399-477; that stretch reads KGPDVTQVLV…GLHPQASLFI (79 aa).

This is Plant UBX domain-containing protein 10 from Arabidopsis thaliana (Mouse-ear cress).